A 141-amino-acid polypeptide reads, in one-letter code: MAMTVHCDIVSAEGEIFSGLVEMVVAHGELGDLGIALGHAPLITNLKPGPIRLIKQGGEAEVFYISGGFLEVQPNMVKVLADTVQRAADLDEASAQEAVKAAEKALNEKGADFDYGSAAARLAEAAAQLRTVQQIRKKFGG.

This sequence belongs to the ATPase epsilon chain family. F-type ATPases have 2 components, CF(1) - the catalytic core - and CF(0) - the membrane proton channel. CF(1) has five subunits: alpha(3), beta(3), gamma(1), delta(1), epsilon(1). CF(0) has three main subunits: a, b and c.

It localises to the cell inner membrane. Produces ATP from ADP in the presence of a proton gradient across the membrane. This Pseudomonas fluorescens (strain ATCC BAA-477 / NRRL B-23932 / Pf-5) protein is ATP synthase epsilon chain.